A 267-amino-acid polypeptide reads, in one-letter code: MSAGGAGGEAKGGFPPQTIMAIGAIGGLAGIYLGNFMPAQFSFFGGLGAICAMVWGADAVRRVASYGLGTGVPSIGMISLGMGIVAALFGLSVGGIAGPIVSFIAAAIIGAVIGVLANKVIGMGIPIMEQAMVEIAGAGTLVIIGLSVVIAGTFDYAEVVEYVVANGYIALIFIIGGMGILHPFNANLGPDEKQDRTLSVAVEKAAIALIITGFASSLHEGLMAAGLNIAVGVIIWAWAFMKYYGYVKRDSYAVVGTGLLPSAEELE.

Helical transmembrane passes span 19-39 (IMAI…FMPA), 40-60 (QFSF…ADAV), 75-95 (IGMI…SVGG), 96-116 (IAGP…IGVL), 131-151 (AMVE…VVIA), 162-182 (YVVA…GILH), and 221-241 (GLMA…WAFM).

The protein belongs to the MtrC family. The complex is composed of 8 subunits; MtrA, MtrB, MtrC, MtrD, MtrE, MtrF, MtrG and MtrH.

Its subcellular location is the cell membrane. The enzyme catalyses 5-methyl-5,6,7,8-tetrahydromethanopterin + coenzyme M + 2 Na(+)(in) = 5,6,7,8-tetrahydromethanopterin + methyl-coenzyme M + 2 Na(+)(out). The protein operates within one-carbon metabolism; methanogenesis from CO(2); methyl-coenzyme M from 5,10-methylene-5,6,7,8-tetrahydromethanopterin: step 2/2. Part of a complex that catalyzes the formation of methyl-coenzyme M and tetrahydromethanopterin from coenzyme M and methyl-tetrahydromethanopterin. This is an energy-conserving, sodium-ion translocating step. In Methanosarcina acetivorans (strain ATCC 35395 / DSM 2834 / JCM 12185 / C2A), this protein is Tetrahydromethanopterin S-methyltransferase subunit C.